A 369-amino-acid chain; its full sequence is Core histone macro-H2A.1 (369 aa).

The region spanning 2–117 is the Histone H2A domain; that stretch reads SSRGGKKKST…NIHPELLAKK (116 aa). N6-lactoyllysine; alternate occurs at positions 7 and 9. An N6-methyllysine modification is found at lysine 18. Residue lysine 116 is modified to N6-acetyllysine; alternate. Lysine 116 is covalently cross-linked (Glycyl lysine isopeptide (Lys-Gly) (interchain with G-Cter in ubiquitin); alternate). Lysine 117 participates in a covalent cross-link: Glycyl lysine isopeptide (Lys-Gly) (interchain with G-Cter in ubiquitin). Lysine 123 is subject to N6-acetyllysine; alternate. Lysine 123 carries the N6,N6-dimethyllysine; alternate modification. A Glycyl lysine isopeptide (Lys-Gly) (interchain with G-Cter in SUMO2); alternate cross-link involves residue lysine 123. The interval 128–180 is disordered; the sequence is ITPPPAKKAKSPSQKKPVSKKAGGKKGARKSKKKQGEVSKAASADSTTEGTPA. The residue at position 129 (threonine 129) is a Phosphothreonine. Basic residues predominate over residues 144 to 160; the sequence is PVSKKAGGKKGARKSKK. A Glycyl lysine isopeptide (Lys-Gly) (interchain with G-Cter in SUMO2) cross-link involves residue lysine 167. Residues serine 170 and serine 173 each carry the phosphoserine modification. Threonine 178 carries the post-translational modification Phosphothreonine. The 184-residue stretch at 184–367 folds into the Macro domain; the sequence is TVLSTKSLFL…IYVQEMAKLD (184 aa). Residue lysine 189 forms a Glycyl lysine isopeptide (Lys-Gly) (interchain with G-Cter in SUMO2) linkage. Positions 203, 204, 226, 275, 312, 313, 314, and 316 each coordinate a glycoprotein. Residue lysine 320 forms a Glycyl lysine isopeptide (Lys-Gly) (interchain with G-Cter in SUMO2) linkage.

It belongs to the histone H2A family. The nucleosome is a histone octamer containing two molecules each of H2A, H2B, H3 and H4 assembled in one H3-H4 heterotetramer and two H2A-H2B heterodimers. Interacts with HDAC1 and HDAC2. Interacts with SPOP. Part of a complex consisting of MACROH2A1, CUL3 and SPOP. As to quaternary structure, interacts with PARP1. In terms of processing, monoubiquitinated at either Lys-116 or Lys-117. May also be polyubiquitinated. Ubiquitination is mediated by the CUL3/SPOP E3 complex and does not promote proteasomal degradation. Instead, it is required for enrichment in inactive X chromosome chromatin. Widely expressed.

The protein resides in the nucleus. It is found in the chromosome. Functionally, variant histone H2A which replaces conventional H2A in a subset of nucleosomes where it represses transcription. Nucleosomes wrap and compact DNA into chromatin, limiting DNA accessibility to the cellular machineries which require DNA as a template. Histones thereby play a central role in transcription regulation, DNA repair, DNA replication and chromosomal stability. DNA accessibility is regulated via a complex set of post-translational modifications of histones, also called histone code, and nucleosome remodeling. Involved in stable X chromosome inactivation. Inhibits the binding of transcription factors, including NF-kappa-B, and interferes with the activity of remodeling SWI/SNF complexes. Inhibits histone acetylation by EP300 and recruits class I HDACs, which induces a hypoacetylated state of chromatin. Isoform that specifically binds poly-ADP-ribose and O-acetyl-ADP-ribose and plays a key role in NAD(+) metabolism. Able to bind to the ends of poly-ADP-ribose chains created by PARP1 and cap them. This prevents PARP1 from further addition of ADP-ribose and thus limits the consumption of nuclear NAD(+), allowing the cell to maintain proper NAD(+) levels in both the nucleus and the mitochondria to promote proper mitochondrial respiration. Increases the expression of genes involved in redox metabolism, including SOD3. In terms of biological role, in contrast to isoform 1, does not bind poly-ADP-ribose. Represses SOD3 gene expression. The protein is Core histone macro-H2A.1 of Homo sapiens (Human).